The chain runs to 118 residues: Large ribosomal subunit protein uL18 (118 aa).

The protein belongs to the universal ribosomal protein uL18 family. As to quaternary structure, part of the 50S ribosomal subunit; part of the 5S rRNA/L5/L18/L25 subcomplex. Contacts the 5S and 23S rRNAs.

This is one of the proteins that bind and probably mediate the attachment of the 5S RNA into the large ribosomal subunit, where it forms part of the central protuberance. The polypeptide is Large ribosomal subunit protein uL18 (Limosilactobacillus reuteri (strain DSM 20016) (Lactobacillus reuteri)).